The sequence spans 134 residues: Ribonuclease VapC40 (134 aa).

The PINc domain occupies 3–126 (APDTSVLVAG…LRAVETYERL (124 aa)). Mg(2+)-binding residues include Asp-5 and Asp-98.

It belongs to the PINc/VapC protein family. Mg(2+) serves as cofactor.

In terms of biological role, toxic component of a type II toxin-antitoxin (TA) system. An RNase. Its cognate antitoxin is VapB40. The chain is Ribonuclease VapC40 from Mycobacterium tuberculosis (strain CDC 1551 / Oshkosh).